We begin with the raw amino-acid sequence, 343 residues long: tRNA N6-adenosine threonylcarbamoyltransferase (343 aa).

Residues H112 and H116 each contribute to the Fe cation site. Substrate is bound by residues 135–139 (LVSGG), D168, G181, and N273. A Fe cation-binding site is contributed by D301.

This sequence belongs to the KAE1 / TsaD family. Fe(2+) is required as a cofactor.

It localises to the cytoplasm. It carries out the reaction L-threonylcarbamoyladenylate + adenosine(37) in tRNA = N(6)-L-threonylcarbamoyladenosine(37) in tRNA + AMP + H(+). Functionally, required for the formation of a threonylcarbamoyl group on adenosine at position 37 (t(6)A37) in tRNAs that read codons beginning with adenine. Is involved in the transfer of the threonylcarbamoyl moiety of threonylcarbamoyl-AMP (TC-AMP) to the N6 group of A37, together with TsaE and TsaB. TsaD likely plays a direct catalytic role in this reaction. This chain is tRNA N6-adenosine threonylcarbamoyltransferase, found in Azoarcus sp. (strain BH72).